Reading from the N-terminus, the 324-residue chain is Phospho-N-acetylmuramoyl-pentapeptide-transferase (324 aa).

The next 10 helical transmembrane spans lie at 9–29, 53–73, 77–97, 117–137, 147–167, 176–196, 201–221, 227–247, 253–273, and 304–324; these read TFAVAFIITVIGVPLFIPFLV, TMGAVVFITAMLISFLVFSFI, VSAATWLLFIALALFGALGFL, FLGQVVISILFYLVYHFNDFA, IEVDLGWFFVIFILFWLVGFS, LDGLVSGLSVIAFSAFGVIAF, MDVAIFCFAIVGGMLGFLLFN, IFMGDTGSLALGGSIAAISIL, LLLLIGIIFVIETASVILQVF, and VLTFWGIGLVGAIISVCVVIF.

It belongs to the glycosyltransferase 4 family. MraY subfamily. Mg(2+) serves as cofactor.

The protein localises to the cell membrane. It carries out the reaction UDP-N-acetyl-alpha-D-muramoyl-L-alanyl-gamma-D-glutamyl-meso-2,6-diaminopimeloyl-D-alanyl-D-alanine + di-trans,octa-cis-undecaprenyl phosphate = di-trans,octa-cis-undecaprenyl diphospho-N-acetyl-alpha-D-muramoyl-L-alanyl-D-glutamyl-meso-2,6-diaminopimeloyl-D-alanyl-D-alanine + UMP. Its pathway is cell wall biogenesis; peptidoglycan biosynthesis. Catalyzes the initial step of the lipid cycle reactions in the biosynthesis of the cell wall peptidoglycan: transfers peptidoglycan precursor phospho-MurNAc-pentapeptide from UDP-MurNAc-pentapeptide onto the lipid carrier undecaprenyl phosphate, yielding undecaprenyl-pyrophosphoryl-MurNAc-pentapeptide, known as lipid I. This is Phospho-N-acetylmuramoyl-pentapeptide-transferase from Listeria monocytogenes serovar 1/2a (strain ATCC BAA-679 / EGD-e).